The primary structure comprises 894 residues: DNA mismatch repair protein MutS (894 aa).

Gly629–Ser636 lines the ATP pocket. Residues Thr819–Glu840 form a disordered region.

Belongs to the DNA mismatch repair MutS family.

Its function is as follows. This protein is involved in the repair of mismatches in DNA. It is possible that it carries out the mismatch recognition step. This protein has a weak ATPase activity. This chain is DNA mismatch repair protein MutS, found in Cupriavidus pinatubonensis (strain JMP 134 / LMG 1197) (Cupriavidus necator (strain JMP 134)).